The chain runs to 493 residues: Cysteine sulfinic acid decarboxylase (493 aa).

The residue at position 305 (Lys305) is an N6-(pyridoxal phosphate)lysine.

This sequence belongs to the group II decarboxylase family. As to quaternary structure, homodimer. Requires pyridoxal 5'-phosphate as cofactor. As to expression, expressed in liver and brain. Also expressed in both astrocytes and neurons, but lower levels are expressed in astrocytes.

The enzyme catalyses L-aspartate + H(+) = beta-alanine + CO2. The catalysed reaction is 3-sulfino-L-alanine + H(+) = hypotaurine + CO2. It catalyses the reaction L-cysteate + H(+) = taurine + CO2. It functions in the pathway organosulfur biosynthesis; taurine biosynthesis; hypotaurine from L-cysteine: step 2/2. In terms of biological role, catalyzes the decarboxylation of L-aspartate, 3-sulfino-L-alanine (cysteine sulfinic acid), and L-cysteate to beta-alanine, hypotaurine and taurine, respectively. The preferred substrate is 3-sulfino-L-alanine. Does not exhibit any decarboxylation activity toward glutamate. The sequence is that of Cysteine sulfinic acid decarboxylase (CSAD) from Homo sapiens (Human).